A 422-amino-acid chain; its full sequence is Tyrosine--tRNA ligase (422 aa).

An L-tyrosine-binding site is contributed by tyrosine 35. Residues 40–49 (PTAASLHVGH) carry the 'HIGH' region motif. L-tyrosine is bound by residues tyrosine 169 and glutamine 173. The 'KMSKS' region motif lies at 229–233 (KFGKT). An ATP-binding site is contributed by lysine 232. One can recognise an S4 RNA-binding domain in the interval 352 to 418 (VRLAQLFADT…GKKSLASVAV (67 aa)).

Belongs to the class-I aminoacyl-tRNA synthetase family. TyrS type 1 subfamily. Homodimer.

The protein localises to the cytoplasm. It carries out the reaction tRNA(Tyr) + L-tyrosine + ATP = L-tyrosyl-tRNA(Tyr) + AMP + diphosphate + H(+). Functionally, catalyzes the attachment of tyrosine to tRNA(Tyr) in a two-step reaction: tyrosine is first activated by ATP to form Tyr-AMP and then transferred to the acceptor end of tRNA(Tyr). This Kineococcus radiotolerans (strain ATCC BAA-149 / DSM 14245 / SRS30216) protein is Tyrosine--tRNA ligase.